Consider the following 203-residue polypeptide: MPIGVPRVPYRLPGEPYSQWISLDDRLYQERILFIGEPIDDSLANTIVGVMLYLNSQDPQKDIVMYINSPGGSVTAGMAIYDTMNHIKPDIVTVCVGQAASMGAFLLAAGTKGKRFALPHSRIMLHQPSLGTIQGQASDIEIRARETLRVKRRMNEILAQTTGQPLEKIERDVERDFYLSATEAQAYGIVDRVIQERSEAMAS.

The active-site Nucleophile is Ser101. The active site involves His126.

It belongs to the peptidase S14 family. Fourteen ClpP subunits assemble into 2 heptameric rings which stack back to back to give a disk-like structure with a central cavity, resembling the structure of eukaryotic proteasomes.

It localises to the cytoplasm. It catalyses the reaction Hydrolysis of proteins to small peptides in the presence of ATP and magnesium. alpha-casein is the usual test substrate. In the absence of ATP, only oligopeptides shorter than five residues are hydrolyzed (such as succinyl-Leu-Tyr-|-NHMec, and Leu-Tyr-Leu-|-Tyr-Trp, in which cleavage of the -Tyr-|-Leu- and -Tyr-|-Trp bonds also occurs).. Its function is as follows. Cleaves peptides in various proteins in a process that requires ATP hydrolysis. Has a chymotrypsin-like activity. Plays a major role in the degradation of misfolded proteins. In Synechococcus sp. (strain JA-2-3B'a(2-13)) (Cyanobacteria bacterium Yellowstone B-Prime), this protein is ATP-dependent Clp protease proteolytic subunit 1.